Here is a 335-residue protein sequence, read N- to C-terminus: Glycerol-3-phosphate dehydrogenase [NAD(P)+] (335 aa).

The NADPH site is built by Ser-12, Trp-13, and Lys-107. Lys-107, Gly-138, and Ser-140 together coordinate sn-glycerol 3-phosphate. Ala-142 contacts NADPH. Lys-193, Asp-246, Ser-256, Arg-257, and Asn-258 together coordinate sn-glycerol 3-phosphate. Lys-193 (proton acceptor) is an active-site residue. An NADPH-binding site is contributed by Arg-257. Positions 281 and 283 each coordinate NADPH.

Belongs to the NAD-dependent glycerol-3-phosphate dehydrogenase family.

The protein localises to the cytoplasm. It carries out the reaction sn-glycerol 3-phosphate + NAD(+) = dihydroxyacetone phosphate + NADH + H(+). The enzyme catalyses sn-glycerol 3-phosphate + NADP(+) = dihydroxyacetone phosphate + NADPH + H(+). It participates in membrane lipid metabolism; glycerophospholipid metabolism. Functionally, catalyzes the reduction of the glycolytic intermediate dihydroxyacetone phosphate (DHAP) to sn-glycerol 3-phosphate (G3P), the key precursor for phospholipid synthesis. The protein is Glycerol-3-phosphate dehydrogenase [NAD(P)+] of Citrifermentans bemidjiense (strain ATCC BAA-1014 / DSM 16622 / JCM 12645 / Bem) (Geobacter bemidjiensis).